The sequence spans 262 residues: Ribosomal RNA small subunit methyltransferase A (262 aa).

6 residues coordinate S-adenosyl-L-methionine: histidine 13, leucine 15, glycine 40, glutamate 61, aspartate 85, and asparagine 103.

It belongs to the class I-like SAM-binding methyltransferase superfamily. rRNA adenine N(6)-methyltransferase family. RsmA subfamily.

It localises to the cytoplasm. The enzyme catalyses adenosine(1518)/adenosine(1519) in 16S rRNA + 4 S-adenosyl-L-methionine = N(6)-dimethyladenosine(1518)/N(6)-dimethyladenosine(1519) in 16S rRNA + 4 S-adenosyl-L-homocysteine + 4 H(+). Functionally, specifically dimethylates two adjacent adenosines (A1518 and A1519) in the loop of a conserved hairpin near the 3'-end of 16S rRNA in the 30S particle. May play a critical role in biogenesis of 30S subunits. In Bordetella avium (strain 197N), this protein is Ribosomal RNA small subunit methyltransferase A.